A 31-amino-acid polypeptide reads, in one-letter code: MLTITSYFGFLLAALTITSALFIGLSKIRLI.

The chain crosses the membrane as a helical span at residues 4–24 (ITSYFGFLLAALTITSALFIG).

It belongs to the PetL family. The 4 large subunits of the cytochrome b6-f complex are cytochrome b6, subunit IV (17 kDa polypeptide, PetD), cytochrome f and the Rieske protein, while the 4 small subunits are PetG, PetL, PetM and PetN. The complex functions as a dimer.

It is found in the plastid. It localises to the chloroplast thylakoid membrane. Component of the cytochrome b6-f complex, which mediates electron transfer between photosystem II (PSII) and photosystem I (PSI), cyclic electron flow around PSI, and state transitions. PetL is important for photoautotrophic growth as well as for electron transfer efficiency and stability of the cytochrome b6-f complex. The sequence is that of Cytochrome b6-f complex subunit 6 from Hamamelis virginiana (Witch-hazel).